The primary structure comprises 96 residues: Small ribosomal subunit protein bS6c (96 aa).

This sequence belongs to the bacterial ribosomal protein bS6 family.

The protein localises to the plastid. It localises to the chloroplast. In terms of biological role, binds together with bS18 to 16S ribosomal RNA. The chain is Small ribosomal subunit protein bS6c (rps6) from Guillardia theta (Cryptophyte).